A 513-amino-acid chain; its full sequence is MKVYKKVAFVMAFIMFFSVLPTISMSSEANGAALSNPNANQTTKNVYSWLANLPNKSNKRVVSGHFGGYSDSTLAWIKQCARELTGKMPGILSCDYKNWQTRLYVADQISYGCNQELINFWNQGGLVTISVHMPNPGFHSGENYKTILPTSQFQNLTNHRTTEGRRWKDMLDKMADGLDELQNNGVTVLFRPLHEMNGEWFWWGAEGYNQFDQTRANAYISAWRDMYQYFTHERKLNNLIWVYSPDVYRDHVTSYYPGANYVDIVALDSYHPDPHSLTDQYNRMIALDKPFAFAEIGPPESMAGSFDYSNYIQAIKQKYPRTVYFLAWNDKWSPHNNRGAWDLFNDSWVVNRGEIDYGQSNPATVLYDFENNTLSWSGCEFTDGGPWTSNEWSANGTQSLKADVVLGNNSYHLQKTVNRNLSSFKNLEIKVSHSSWGNVGSGMTARVFVKTGSAWRWNAGEFCQFAGKRTTALSIDLTKVSNLHDVREIGVEYKAPANSNGKTAIYLDHVTVR.

Positions 1–26 (MKVYKKVAFVMAFIMFFSVLPTISMS) are cleaved as a signal peptide. Residues 41–353 (QTTKNVYSWL…FNDSWVVNRG (313 aa)) form the GH26 domain. Residue H132 participates in substrate binding. The active-site Proton donor is E195. W200 and Y270 together coordinate substrate. E295 (nucleophile) is an active-site residue. 429–430 (IK) is a binding site for substrate.

The protein belongs to the glycosyl hydrolase 26 family.

It is found in the secreted. It carries out the reaction Random hydrolysis of (1-&gt;4)-beta-D-mannosidic linkages in mannans, galactomannans and glucomannans.. Could be involved in the degradation of glucomannan and catalyzes the endo hydrolysis of beta-1,4-linked mannan, galactomannan and glucomannan. This is Mannan endo-1,4-beta-mannosidase A and B from Caldalkalibacillus mannanilyticus (strain DSM 16130 / CIP 109019 / JCM 10596 / AM-001) (Bacillus mannanilyticus).